A 481-amino-acid polypeptide reads, in one-letter code: ATP synthase subunit beta (481 aa).

154 to 161 (GGAGVGKT) contacts ATP.

This sequence belongs to the ATPase alpha/beta chains family. As to quaternary structure, F-type ATPases have 2 components, CF(1) - the catalytic core - and CF(0) - the membrane proton channel. CF(1) has five subunits: alpha(3), beta(3), gamma(1), delta(1), epsilon(1). CF(0) has three main subunits: a(1), b(2) and c(9-12). The alpha and beta chains form an alternating ring which encloses part of the gamma chain. CF(1) is attached to CF(0) by a central stalk formed by the gamma and epsilon chains, while a peripheral stalk is formed by the delta and b chains.

It localises to the cell inner membrane. It carries out the reaction ATP + H2O + 4 H(+)(in) = ADP + phosphate + 5 H(+)(out). Produces ATP from ADP in the presence of a proton gradient across the membrane. The catalytic sites are hosted primarily by the beta subunits. This Novosphingobium aromaticivorans (strain ATCC 700278 / DSM 12444 / CCUG 56034 / CIP 105152 / NBRC 16084 / F199) protein is ATP synthase subunit beta.